The chain runs to 60 residues: Stress response protein YkoL (60 aa).

The chain is Stress response protein YkoL (ykoL) from Bacillus subtilis (strain 168).